Here is a 314-residue protein sequence, read N- to C-terminus: Taste receptor type 2 member 42 (314 aa).

Over 1–7 (MATELDK) the chain is Extracellular. Residues 8–28 (IFLILAIAEFIISMLGNVFIG) form a helical membrane-spanning segment. Over 29-50 (LVNCSEGIKNQKVFSADFILTC) the chain is Cytoplasmic. Residues 51 to 71 (LAISTIGQLLVILFDSFLVGL) form a helical membrane-spanning segment. The Extracellular portion of the chain corresponds to 72–101 (ASHLYTTYRLGKTVIMLWHMTNHLTTWLAT). A helical transmembrane segment spans residues 102-122 (CLSIFYFFKIAHFPHSLFLWL). Over 123–127 (RWRMN) the chain is Cytoplasmic. Residues 128–148 (GMIVMLLILSLFLLIFDSLVL) traverse the membrane as a helical segment. Residues 149–187 (EIFIDISLNIIDKSNLTLYLDESKTLYDKLSILKTLLSL) are Extracellular-facing. The N-linked (GlcNAc...) asparagine glycan is linked to N163. Residues 188 to 208 (TSFIPFSLFLTSLLFLFLSLV) form a helical membrane-spanning segment. Residues 209–238 (RHTRNLKLSSLGSRDSSTEAHRRAMKMVMS) are Cytoplasmic-facing. A helical membrane pass occupies residues 239 to 259 (FLFLFIVHFFSLQVANWIFFM). The Extracellular portion of the chain corresponds to 260 to 265 (LWNNKC). Residues 266–286 (IKFVMLALNAFPSCHSFILIL) traverse the membrane as a helical segment. Topologically, residues 287-314 (GNSKLQQTAVRLLWHLRNYTKTPNPLPL) are cytoplasmic.

This sequence belongs to the G-protein coupled receptor T2R family.

It is found in the membrane. In terms of biological role, receptor that may play a role in the perception of bitterness and is gustducin-linked. May play a role in sensing the chemical composition of the gastrointestinal content. The activity of this receptor may stimulate alpha gustducin, mediate PLC-beta-2 activation and lead to the gating of TRPM5. The protein is Taste receptor type 2 member 42 (TAS2R42) of Homo sapiens (Human).